The chain runs to 240 residues: Acetoacetyl-CoA reductase (240 aa).

NADP(+) is bound by residues 18 to 20 (RGI) and 82 to 86 (NAGIT). Substrate contacts are provided by residues Ser134 and 141-144 (NVGQ). Tyr147 (proton acceptor) is an active-site residue. 177–180 (PGFI) provides a ligand contact to NADP(+). Substrate is bound at residue 178-179 (GF).

It belongs to the short-chain dehydrogenases/reductases (SDR) family.

The catalysed reaction is a (3R)-3-hydroxyacyl-CoA + NADP(+) = a 3-oxoacyl-CoA + NADPH + H(+). Its pathway is biopolymer metabolism; poly-(R)-3-hydroxybutanoate biosynthesis. In terms of biological role, catalyzes the reduction of acetoacetyl-CoA to (R)-3-hydroxybutyryl-CoA. When expressed in E.coli with Synechocystis PhaA, PhaC and PhaE confers the ability to synthesize up to 12% (w/w) poly(3-hydroxybutyrate) (PHB) depending on the carbon source. The protein is Acetoacetyl-CoA reductase of Synechocystis sp. (strain ATCC 27184 / PCC 6803 / Kazusa).